Consider the following 591-residue polypeptide: L-fucose isomerase (591 aa).

Active-site proton acceptor residues include Glu337 and Asp361. Glu337, Asp361, and His528 together coordinate Mn(2+).

This sequence belongs to the L-fucose isomerase family. In terms of assembly, homohexamer. Mn(2+) is required as a cofactor.

It is found in the cytoplasm. It catalyses the reaction L-fucose = L-fuculose. It participates in carbohydrate degradation; L-fucose degradation; L-lactaldehyde and glycerone phosphate from L-fucose: step 1/3. In terms of biological role, converts the aldose L-fucose into the corresponding ketose L-fuculose. This Escherichia coli (strain 55989 / EAEC) protein is L-fucose isomerase.